A 365-amino-acid chain; its full sequence is Aminomethyltransferase (365 aa).

Belongs to the GcvT family. As to quaternary structure, the glycine cleavage system is composed of four proteins: P, T, L and H.

It carries out the reaction N(6)-[(R)-S(8)-aminomethyldihydrolipoyl]-L-lysyl-[protein] + (6S)-5,6,7,8-tetrahydrofolate = N(6)-[(R)-dihydrolipoyl]-L-lysyl-[protein] + (6R)-5,10-methylene-5,6,7,8-tetrahydrofolate + NH4(+). Functionally, the glycine cleavage system catalyzes the degradation of glycine. The chain is Aminomethyltransferase from Yersinia pseudotuberculosis serotype O:3 (strain YPIII).